Consider the following 129-residue polypeptide: UPF0102 protein Cag_1992 (129 aa).

The protein belongs to the UPF0102 family.

The polypeptide is UPF0102 protein Cag_1992 (Chlorobium chlorochromatii (strain CaD3)).